Here is a 636-residue protein sequence, read N- to C-terminus: MKKNFFVSTPIYYVNGDPHVGSAYTTIAADVINRYNKAMGMDTHFVTGLDEHGQKVEQAAKQNGFTPQAWTDKMTPNFKNMWAALDIKYDDFIRTTEDRHKKAVKRILDIVNAKGDIYKGEYEGKYCVSCETFFPENQLNGSNKCPDCGKDLTVLKEESYFFKMSKYADALLKHIDEHPDFILPHSRRNEVISFIKQGLQDLSISRNTFSWGIPIDFAPGHITYVWFDALTNYITSAGFENDENKFDKFWNNSRVVHLIGKDIIRFHAIIWPCMLLSAGIKLPDSIVAHGWWTSEGEKMSKSRGNVVNPYDEIKKYGVDAFRYYLLREANFGTDGDYSTKGIIGRLNSDLANDLGNLLNRTLGMYKKYFNGTIVSSSTVEPIDDEIKSMFNDVVKDVEKYMYLFEFSRALETIWKFISRLNKYIDETMPWTLAKNEAKKARLAAVMNILCEGLYKIAFLIAPYMPESAQKISNQLGIDKDITNLKFDDIKEWSIFKEGHKLGEASPIFPRIEIEKEEIVETKKELKIENPVDIKEFNKIEIKVVEILDVDKVEGADKLLKFKVFDGEFERQIISGLAKFYPDFKKLISEKVLAVVNLKFTKLKGEISQGMLLTTEDKNGVSLIKIDKTVEAGAIVS.

A 'HIGH' region motif is present at residues 12-22 (YYVNGDPHVGS). Zn(2+) contacts are provided by C127, C130, C145, and C148. The 'KMSKS' region signature appears at 298 to 302 (KMSKS). K301 contacts ATP. In terms of domain architecture, tRNA-binding spans 535–636 (EFNKIEIKVV…KTVEAGAIVS (102 aa)).

Belongs to the class-I aminoacyl-tRNA synthetase family. MetG type 2A subfamily. Homodimer. Requires Zn(2+) as cofactor.

The protein resides in the cytoplasm. The catalysed reaction is tRNA(Met) + L-methionine + ATP = L-methionyl-tRNA(Met) + AMP + diphosphate. Its function is as follows. Is required not only for elongation of protein synthesis but also for the initiation of all mRNA translation through initiator tRNA(fMet) aminoacylation. This Fusobacterium nucleatum subsp. nucleatum (strain ATCC 25586 / DSM 15643 / BCRC 10681 / CIP 101130 / JCM 8532 / KCTC 2640 / LMG 13131 / VPI 4355) protein is Methionine--tRNA ligase (metG).